A 249-amino-acid chain; its full sequence is Zinc finger AN1 and C2H2 domain-containing stress-associated protein 13 (249 aa).

2 AN1-type zinc fingers span residues 7–55 and 95–145; these read PDLG…RGDV and AVKK…KPES. C13, C18, C28, C31, C36, H39, H45, C47, C101, C106, C118, C121, C126, H129, H135, and C137 together coordinate Zn(2+). Residues 194–213 are disordered; sequence FASGNDGNSEKTQERNGKQN. Residues 201–210 are compositionally biased toward basic and acidic residues; the sequence is NSEKTQERNG. The segment at 220–243 adopts a C2H2-type zinc-finger fold; the sequence is DVCPKCSRGFRDPVDLLKHIDKDH.

In terms of biological role, may be involved in environmental stress response. In Arabidopsis thaliana (Mouse-ear cress), this protein is Zinc finger AN1 and C2H2 domain-containing stress-associated protein 13 (SAP13).